Consider the following 979-residue polypeptide: UPF0182 protein Rv0064 (979 aa).

7 helical membrane-spanning segments follow: residues 19–41, 63–85, 114–136, 174–196, 208–230, 261–280, and 285–307; these read LVTA…DIYV, LAIV…LLAY, LFGW…FDWV, WLFV…FGGL, AARV…AYWL, LVLV…AIFL, and IPAM…WPLL. A disordered region spans residues 898 to 948; that stretch reads GTGRVATARGGDAASAPPPGAGGPAPPQAVPPPRTTQPPAAPPRGPDVPPA. Over residues 913 to 946 the composition is skewed to pro residues; sequence APPPGAGGPAPPQAVPPPRTTQPPAAPPRGPDVP.

The protein belongs to the UPF0182 family.

The protein localises to the cell membrane. This chain is UPF0182 protein Rv0064, found in Mycobacterium tuberculosis (strain ATCC 25618 / H37Rv).